A 455-amino-acid polypeptide reads, in one-letter code: MSVILTETNGSDERRKVAIVGAGLVGSLAALYFARMGNQVDLYEYRDDVRKSELVQGRSINLALSQRGRKALSQLGLGLEEQVLSTAIPMKGRMLHNIQGKTSVVIYDPCFKQCLYSVGRKQLNELLLNACDKFPNIKCHFDHKLTKANVKEGQLEFKRSHSVEGVKAKADLIVGCDGAFSALRQNLIKLPGFNYTQEYIETGYLELCIPAKKNEFQMPPNYLHIWPRDNFMMIALPNQDKSFTVTLSMPFDIFASIKNPEELIQFFTQYYPDALPLIGKEQLIKDFFKTKPQHLLSIKCRPYHYENKALLLGDAAHAMVPYYGQGMNAGMEDVTLLNSLLQQLPLEEALAQYTEQRWQDAFAICDLAMYNYVEMRDLTKRWSFRCRKMLDTWLFRLFPTIWVPLYNSVSFTSMPYSKCIANRKWQDQLLWRTFLGFIVVGLGVTGSAIYWQRFR.

Helical transmembrane passes span 393 to 416 and 429 to 453; these read WLFR…SMPY and LLWR…YWQR.

This sequence belongs to the aromatic-ring hydroxylase family. KMO subfamily. FAD serves as cofactor.

The protein resides in the mitochondrion. The protein localises to the membrane. It carries out the reaction L-kynurenine + NADPH + O2 + H(+) = 3-hydroxy-L-kynurenine + NADP(+) + H2O. It functions in the pathway cofactor biosynthesis; NAD(+) biosynthesis; quinolinate from L-kynurenine: step 1/3. Its function is as follows. Catalyzes the hydroxylation of L-kynurenine (L-Kyn) to form 3-hydroxy-L-kynurenine (L-3OHKyn). Required for synthesis of quinolinic acid. This is Kynurenine 3-monooxygenase from Drosophila willistoni (Fruit fly).